Consider the following 748-residue polypeptide: E3 ubiquitin-protein ligase DTX3L (748 aa).

At Ala2 the chain carries N-acetylalanine. Ser9 carries the phosphoserine modification. Disordered regions lie at residues Asp94–Thr117, Glu209–Gln238, and Gln528–Ser562. Over residues Ser101–Thr117 the composition is skewed to polar residues. Composition is skewed to basic and acidic residues over residues Glu209 to Arg219 and Thr227 to Pro236. Position 215 is a phosphoserine (Ser215). Ser536 is modified (phosphoserine). Residues Cys569–Leu608 form an RING-type zinc finger.

This sequence belongs to the Deltex family. As to quaternary structure, homodimer and heterodimer. Can heterodimerize with DTX1, enhancing its ubiquitin ligase activity in vitro. Interacts (via N-terminus) with ADP ribosyltransferase PARP9/BAL1 (via PARP catalytic domain) forming a stable complex; the interaction is required to activate PARP9 but is dispensable for DTX3L catalytic activity. Forms a complex with STAT1 and PARP9 independently of IFNB1 or IFNG-mediated STAT1 'Tyr-701' phosphorylation. Found in a complex with PARP9, STAT1 and H2BC9. Found in a complex with E3 ligase ITCH and ESCRT-0 components HGS and STAM. Interacts (via C-terminus) with ITCH; the interaction is increased upon CXCL12 stimulation and inhibits ITCH catalytic activity; the interaction is direct. Interacts with HGS and STAM; the interaction brings together HGS and STAM and promotes their recruitment to early endosomes. Post-translationally, autoubiquitinated.

The protein resides in the cytoplasm. It is found in the nucleus. Its subcellular location is the early endosome membrane. The protein localises to the lysosome membrane. The enzyme catalyses S-ubiquitinyl-[E2 ubiquitin-conjugating enzyme]-L-cysteine + [acceptor protein]-L-lysine = [E2 ubiquitin-conjugating enzyme]-L-cysteine + N(6)-ubiquitinyl-[acceptor protein]-L-lysine.. It functions in the pathway protein modification; protein ubiquitination. With respect to regulation, binding to PARP9 enhances DTX3L catalytic activity. Its function is as follows. E3 ubiquitin-protein ligase which, in association with ADP-ribosyltransferase PARP9, plays a role in DNA damage repair and in interferon-mediated antiviral responses. Monoubiquitinates several histones, including histone H2A, H2B, H3 and H4. In response to DNA damage, mediates monoubiquitination of 'Lys-91' of histone H4 (H4K91ub1). The exact role of H4K91ub1 in DNA damage response is still unclear but it may function as a licensing signal for additional histone H4 post-translational modifications such as H4 'Lys-20' methylation (H4K20me). PARP1-dependent PARP9-DTX3L-mediated ubiquitination promotes the rapid and specific recruitment of 53BP1/TP53BP1, UIMC1/RAP80, and BRCA1 to DNA damage sites. By monoubiquitinating histone H2B H2BC9/H2BJ and thereby promoting chromatin remodeling, positively regulates STAT1-dependent interferon-stimulated gene transcription and thus STAT1-mediated control of viral replication. Independently of its catalytic activity, promotes the sorting of chemokine receptor CXCR4 from early endosome to lysosome following CXCL12 stimulation by reducing E3 ligase ITCH activity and thus ITCH-mediated ubiquitination of endosomal sorting complex required for transport ESCRT-0 components HGS and STAM. In addition, required for the recruitment of HGS and STAM to early endosomes. The sequence is that of E3 ubiquitin-protein ligase DTX3L (Dtx3l) from Mus musculus (Mouse).